The chain runs to 617 residues: MKQSKMLIPTLREMPSDAQVISHALMVRAGYVRQVSAGIYAYLPLANRTIEKFKTIMRQEFEKIGAVEMLAPALLTADLWRESGRYETYGEDLYKLKNRDQSDFILGPTHEETFTTLVRDAVKSYKQLPLNLYQIQSKYRDEKRPRNGLLRTREFIMKDGYSFHKDYEDLDVTYEDYRKAYEAIFTRAGLDFKGIIGDGGAMGGKDSQEFMAVTPNRTDLNRWLVLDKTIPSIDDIPEDVLEEIKVELSAWLVSGEDTIAYSTESSYAANLEMATNEYKPSTKAATFEEVTRVETPNCKSIDEVAGFLSIDENQTIKTLLFIADEQPVVALLVGNDQVNDVKLKNYLAADFLEPASEEQAKEIFGAGFGSLGPVNLPDSVKIIADRKVQDLANAVSGANQDGYHFTGVNPERDFTAEYVDIREVKEGEISPDGKGTLKFARGIEIGHIFKLGTRYSDSMGANILDENGRSNPIVMGCYGIGVSRILSAVIEQHARLFVNKTPKGAYRFAWGINFPEELAPFDVHLITVNVKDQESQDLTEKIEADLMLKGYEVLTDDRNERVGSKFSDSDLIGLPIRVTVGKKASEGIVEVKIKASGDTIEVHADNLIETLEILTKK.

This sequence belongs to the class-II aminoacyl-tRNA synthetase family. ProS type 1 subfamily. As to quaternary structure, homodimer.

It localises to the cytoplasm. The enzyme catalyses tRNA(Pro) + L-proline + ATP = L-prolyl-tRNA(Pro) + AMP + diphosphate. Catalyzes the attachment of proline to tRNA(Pro) in a two-step reaction: proline is first activated by ATP to form Pro-AMP and then transferred to the acceptor end of tRNA(Pro). As ProRS can inadvertently accommodate and process non-cognate amino acids such as alanine and cysteine, to avoid such errors it has two additional distinct editing activities against alanine. One activity is designated as 'pretransfer' editing and involves the tRNA(Pro)-independent hydrolysis of activated Ala-AMP. The other activity is designated 'posttransfer' editing and involves deacylation of mischarged Ala-tRNA(Pro). The misacylated Cys-tRNA(Pro) is not edited by ProRS. This is Proline--tRNA ligase from Streptococcus agalactiae serotype III (strain NEM316).